Reading from the N-terminus, the 207-residue chain is MIAIVDYNMGNLASVQNAFAKIGTQTVIEGDPKKFKEYDKLILPGVGAFGDAMEHLRERGMIEAIKEFAASTKPILGICLGMQLLFESSEEFGEHEGLGLIKGKVVAFDTSKFEETLKVPHMGWNRMFTKEHPLFEGLDEEHYLYFVHSYHALCDDEKDSIGRTFYGYEFTSAVAHDNIMGIQPHPEKSHDNGLKILENFTKYRNLK.

The 207-residue stretch at 1-207 (MIAIVDYNMG…ENFTKYRNLK (207 aa)) folds into the Glutamine amidotransferase type-1 domain. The active-site Nucleophile is cysteine 79. Residues histidine 185 and glutamate 187 contribute to the active site.

As to quaternary structure, heterodimer of HisH and HisF.

Its subcellular location is the cytoplasm. It carries out the reaction 5-[(5-phospho-1-deoxy-D-ribulos-1-ylimino)methylamino]-1-(5-phospho-beta-D-ribosyl)imidazole-4-carboxamide + L-glutamine = D-erythro-1-(imidazol-4-yl)glycerol 3-phosphate + 5-amino-1-(5-phospho-beta-D-ribosyl)imidazole-4-carboxamide + L-glutamate + H(+). The catalysed reaction is L-glutamine + H2O = L-glutamate + NH4(+). Its pathway is amino-acid biosynthesis; L-histidine biosynthesis; L-histidine from 5-phospho-alpha-D-ribose 1-diphosphate: step 5/9. Functionally, IGPS catalyzes the conversion of PRFAR and glutamine to IGP, AICAR and glutamate. The HisH subunit catalyzes the hydrolysis of glutamine to glutamate and ammonia as part of the synthesis of IGP and AICAR. The resulting ammonia molecule is channeled to the active site of HisF. This Sulfurimonas denitrificans (strain ATCC 33889 / DSM 1251) (Thiomicrospira denitrificans (strain ATCC 33889 / DSM 1251)) protein is Imidazole glycerol phosphate synthase subunit HisH.